Reading from the N-terminus, the 204-residue chain is FMN-dependent NADH:quinone oxidoreductase 1 (204 aa).

FMN is bound by residues Ser14, Ser20 to Ser22, and Met99 to Phe102.

Belongs to the azoreductase type 1 family. As to quaternary structure, homodimer. FMN serves as cofactor.

The enzyme catalyses 2 a quinone + NADH + H(+) = 2 a 1,4-benzosemiquinone + NAD(+). It catalyses the reaction N,N-dimethyl-1,4-phenylenediamine + anthranilate + 2 NAD(+) = 2-(4-dimethylaminophenyl)diazenylbenzoate + 2 NADH + 2 H(+). In terms of biological role, quinone reductase that provides resistance to thiol-specific stress caused by electrophilic quinones. Functionally, also exhibits azoreductase activity. Catalyzes the reductive cleavage of the azo bond in aromatic azo compounds to the corresponding amines. The polypeptide is FMN-dependent NADH:quinone oxidoreductase 1 (Hahella chejuensis (strain KCTC 2396)).